Consider the following 387-residue polypeptide: MKQAVIVDCIRTPMGRSKAGVFRNVRAETLSAELMKGLLLRNPQLDPNTIEDVIWGCVQQTLEQGFNIARNASLLAGIPKTAGAVTVNRLCGSSMEAIHQAARAIMTGMGDTFIIGGVEHMGHVPMNHGVDFHPGLANNVAKASGMMGLTAEMLGKLHGITREQQDAFAVRSHQRAHAATVEGRFAKEIYGIEGHDANGALIKVLHDEVIRPETSMESLAALRPVFDPANGTVTAGTSSALSDGASAMLVMEESKARALGLPIRARIRSMAVAGCDAAIMGYGPVPATQKALARAGITVNDLDVIELNEAFAAQSLPCVKDLGLLDVVEDKINLNGGAIALGHPLGCSGARISTTLINLMEHKDATLGLATMCIGLGQGIATVFERV.

Residue cysteine 91 is the Acyl-thioester intermediate of the active site. Active-site proton acceptor residues include histidine 343 and cysteine 373.

Belongs to the thiolase-like superfamily. Thiolase family. In terms of assembly, heterotetramer of two alpha chains (FadB) and two beta chains (FadA).

It is found in the cytoplasm. It catalyses the reaction an acyl-CoA + acetyl-CoA = a 3-oxoacyl-CoA + CoA. Its pathway is lipid metabolism; fatty acid beta-oxidation. In terms of biological role, catalyzes the final step of fatty acid oxidation in which acetyl-CoA is released and the CoA ester of a fatty acid two carbons shorter is formed. This chain is 3-ketoacyl-CoA thiolase, found in Shewanella sp. (strain ANA-3).